The primary structure comprises 154 residues: UPF0127 protein TSIB_1463 (154 aa).

Belongs to the UPF0127 family.

The polypeptide is UPF0127 protein TSIB_1463 (Thermococcus sibiricus (strain DSM 12597 / MM 739)).